The following is a 121-amino-acid chain: Glycine cleavage system H protein (121 aa).

In terms of domain architecture, Lipoyl-binding spans isoleucine 22–glutamate 102. An N6-lipoyllysine modification is found at lysine 63.

Belongs to the GcvH family. The glycine cleavage system is composed of four proteins: P, T, L and H. (R)-lipoate serves as cofactor.

Its function is as follows. The glycine cleavage system catalyzes the degradation of glycine. The H protein shuttles the methylamine group of glycine from the P protein to the T protein. This Tropheryma whipplei (strain TW08/27) (Whipple's bacillus) protein is Glycine cleavage system H protein.